A 576-amino-acid chain; its full sequence is Arginine--tRNA ligase (576 aa).

Positions 122–132 (PNVAKEMHVGH) match the 'HIGH' region motif.

It belongs to the class-I aminoacyl-tRNA synthetase family. In terms of assembly, monomer.

The protein localises to the cytoplasm. The catalysed reaction is tRNA(Arg) + L-arginine + ATP = L-arginyl-tRNA(Arg) + AMP + diphosphate. The sequence is that of Arginine--tRNA ligase from Pectobacterium carotovorum subsp. carotovorum (strain PC1).